A 291-amino-acid polypeptide reads, in one-letter code: Nucleotide-binding protein EUBREC_0697 (291 aa).

An ATP-binding site is contributed by 8–15 (GMSGAGKS). A GTP-binding site is contributed by 59 to 62 (DVRN).

It belongs to the RapZ-like family.

In terms of biological role, displays ATPase and GTPase activities. The chain is Nucleotide-binding protein EUBREC_0697 from Agathobacter rectalis (strain ATCC 33656 / DSM 3377 / JCM 17463 / KCTC 5835 / VPI 0990) (Eubacterium rectale).